The primary structure comprises 301 residues: Homoserine O-acetyltransferase (301 aa).

Catalysis depends on Cys-142, which acts as the Acyl-thioester intermediate. Residues Lys-163 and Ser-192 each coordinate substrate. His-235 serves as the catalytic Proton acceptor. Glu-237 is an active-site residue. Residue Arg-249 participates in substrate binding.

This sequence belongs to the MetA family.

It is found in the cytoplasm. It catalyses the reaction L-homoserine + acetyl-CoA = O-acetyl-L-homoserine + CoA. It participates in amino-acid biosynthesis; L-methionine biosynthesis via de novo pathway; O-acetyl-L-homoserine from L-homoserine: step 1/1. Transfers an acetyl group from acetyl-CoA to L-homoserine, forming acetyl-L-homoserine. In Bacillus cereus (strain 03BB102), this protein is Homoserine O-acetyltransferase.